A 344-amino-acid polypeptide reads, in one-letter code: 5-formaminoimidazole-4-carboxamide-1-(beta)-D-ribofuranosyl 5'-monophosphate synthetase (344 aa).

5-amino-1-(5-phospho-beta-D-ribosyl)imidazole-4-carboxamide contacts are provided by His31 and Ser96. The region spanning 130–324 is the ATP-grasp domain; it reads MELLQRAGVP…YFDRPMDMGE (195 aa). ATP contacts are provided by residues 153 to 198 and Glu220; that span reads PVIV…VPAY. Asn240 is a binding site for 5-amino-1-(5-phospho-beta-D-ribosyl)imidazole-4-carboxamide. 2 residues coordinate Mg(2+): Glu279 and Glu292.

The protein belongs to the phosphohexose mutase family. Mg(2+) serves as cofactor. Requires Mn(2+) as cofactor.

The enzyme catalyses 5-amino-1-(5-phospho-beta-D-ribosyl)imidazole-4-carboxamide + formate + ATP = 5-formamido-1-(5-phospho-D-ribosyl)imidazole-4-carboxamide + ADP + phosphate. It functions in the pathway purine metabolism; IMP biosynthesis via de novo pathway; 5-formamido-1-(5-phospho-D-ribosyl)imidazole-4-carboxamide from 5-amino-1-(5-phospho-D-ribosyl)imidazole-4-carboxamide (formate route): step 1/1. Its function is as follows. Catalyzes the ATP- and formate-dependent formylation of 5-aminoimidazole-4-carboxamide-1-beta-d-ribofuranosyl 5'-monophosphate (AICAR) to 5-formaminoimidazole-4-carboxamide-1-beta-d-ribofuranosyl 5'-monophosphate (FAICAR) in the absence of folates. The protein is 5-formaminoimidazole-4-carboxamide-1-(beta)-D-ribofuranosyl 5'-monophosphate synthetase of Pyrobaculum neutrophilum (strain DSM 2338 / JCM 9278 / NBRC 100436 / V24Sta) (Thermoproteus neutrophilus).